The chain runs to 704 residues: Glycogen [starch] synthase, liver (704 aa).

Ser-8 bears the Phosphoserine; by AMPK and PKA mark. Ser-11 is modified (phosphoserine). UDP is bound at residue Lys-40. 2 residues coordinate UDP-alpha-D-glucose: His-205 and Arg-211. Positions 291, 292, 294, 297, and 301 each coordinate alpha-D-glucose 6-phosphate. UDP is bound at residue Arg-331. Arg-331 lines the UDP-alpha-D-glucose pocket. His-501 provides a ligand contact to alpha-D-glucose 6-phosphate. UDP-alpha-D-glucose-binding residues include Glu-510, Trp-512, and Gly-513. Thr-515 provides a ligand contact to UDP. Alpha-D-glucose 6-phosphate-binding residues include Arg-582 and Arg-586. The disordered stretch occupies residues 620–704; that stretch reads KFHLEPTSPP…KKKLHGEYKN (85 aa). Ser-627 bears the Phosphoserine mark. Residues Ser-641, Ser-645, Ser-649, and Ser-653 each carry the phosphoserine; by GSK3-alpha and GSK3-beta modification. Residues 647-657 show a composition bias toward low complexity; it reads SGSQASSPQCS. Ser-657 is modified (phosphoserine; by CK2). A compositionally biased stretch (acidic residues) spans 658–675; it reads DAEDEEDEDERYDEEEEA. A Phosphoserine modification is found at Ser-684.

Belongs to the glycosyltransferase 3 family. As to quaternary structure, part of the glycogen synthase (GS)-glycogenin complex, a heterooctamer composed of a tetramer of GS and 2 dimers of glycogenin, where each GS protomer binds to one glycogenin subunit (via glycogenin C-terminus); the GS tetramer may dissociate from glycogenin dimers to continue glycogen polymerization on its own. May also form a heterooctamer complex with GYG1 (via GYG1 C-terminus). In terms of processing, phosphorylation reduces the activity towards UDP-alpha-D-glucose. Primed phosphorylation at Ser-657 (site 5) by CSNK2A1 and CSNK2A2 is required for inhibitory phosphorylation at Ser-641 (site 3a), Ser-645 (site 3b), Ser-649 (site 3c) and Ser-653 (site 4) by GSK3A an GSK3B. Dephosphorylation at Ser-641 and Ser-645 by PP1 activates the enzyme. Phosphorylation at Ser-8 is not required for interaction with GYG1. Interaction with GYG1 does not regulate the phosphorylation at Ser-8 and Ser-641. In terms of tissue distribution, specifically expressed in liver.

It carries out the reaction [(1-&gt;4)-alpha-D-glucosyl](n) + UDP-alpha-D-glucose = [(1-&gt;4)-alpha-D-glucosyl](n+1) + UDP + H(+). It participates in glycan biosynthesis; glycogen biosynthesis. Allosteric activation by glucose-6-phosphate. Phosphorylation reduces the activity towards UDP-glucose. When in the non-phosphorylated state, glycogen synthase does not require glucose-6-phosphate as an allosteric activator; when phosphorylated it does. Functionally, glycogen synthase participates in the glycogen biosynthetic process along with glycogenin and glycogen branching enzyme. Extends the primer composed of a few glucose units formed by glycogenin by adding new glucose units to it. In this context, glycogen synthase transfers the glycosyl residue from UDP-Glc to the non-reducing end of alpha-1,4-glucan. In Mus musculus (Mouse), this protein is Glycogen [starch] synthase, liver.